The primary structure comprises 147 residues: UPF0178 protein CV_1768 (147 aa).

The protein belongs to the UPF0178 family.

The polypeptide is UPF0178 protein CV_1768 (Chromobacterium violaceum (strain ATCC 12472 / DSM 30191 / JCM 1249 / CCUG 213 / NBRC 12614 / NCIMB 9131 / NCTC 9757 / MK)).